Consider the following 226-residue polypeptide: 3-dehydroquinate dehydratase (226 aa).

3-dehydroquinate-binding positions include 30-32 (EWR) and Arg62. The active-site Proton donor/acceptor is the His118. Lys143 acts as the Schiff-base intermediate with substrate in catalysis. Residues Arg186, Ser205, and Gln209 each coordinate 3-dehydroquinate.

The protein belongs to the type-I 3-dehydroquinase family. In terms of assembly, homodimer.

The enzyme catalyses 3-dehydroquinate = 3-dehydroshikimate + H2O. It functions in the pathway metabolic intermediate biosynthesis; chorismate biosynthesis; chorismate from D-erythrose 4-phosphate and phosphoenolpyruvate: step 3/7. In terms of biological role, involved in the third step of the chorismate pathway, which leads to the biosynthesis of aromatic amino acids. Catalyzes the cis-dehydration of 3-dehydroquinate (DHQ) and introduces the first double bond of the aromatic ring to yield 3-dehydroshikimate. The polypeptide is 3-dehydroquinate dehydratase (Streptococcus equi subsp. zooepidemicus (strain H70)).